The following is a 184-amino-acid chain: Effector CFEM1 (184 aa).

The first 17 residues, Met1–Ala17, serve as a signal peptide directing secretion. The CFEM domain maps to Gln18–Thr112. 4 disulfides stabilise this stretch: Cys26–Cys68, Cys30–Cys63, Cys41–Cys48, and Cys50–Cys85. Residue Asp45 participates in heme binding. 2 disordered regions span residues Asn83–Thr106 and Ile136–Asn163. A compositionally biased stretch (basic and acidic residues) spans Pro88–Pro103. Asn163 carries GPI-anchor amidated asparagine lipidation. The propeptide at Gly164–Leu184 is removed in mature form.

This sequence belongs to the RBT5 family. In terms of assembly, interacts with Z.mays LRR5; the interaction is direct. Interacts (via CFEM domain) with Z.mays WAK17 isoform 2; the interaction is direct.

The protein resides in the secreted. The protein localises to the cell wall. Its subcellular location is the cell membrane. It is found in the cell septum. It localises to the cytoplasm. Suppresses host programmed cell death during infection by binding to Z.mays WAK17 isoform 2 and Z.mays LRR5, to prevent activation of Z.mays WAK17 isoform 1 and the downstream hypersensitive response. The protein is Effector CFEM1 of Gibberella zeae (strain ATCC MYA-4620 / CBS 123657 / FGSC 9075 / NRRL 31084 / PH-1) (Wheat head blight fungus).